A 361-amino-acid polypeptide reads, in one-letter code: Diacylglycerol O-acyltransferase 2 (361 aa).

The Cytoplasmic portion of the chain corresponds to 1 to 42 (MKTIIAAYSGVLRGTGSSLLSAVHDLPNIPWLSKSSVVRHLQ). A helical transmembrane segment spans residues 43-61 (IISVLQWVLSFLILGVACT). Residues 62–65 (AVLV) are Lumenal-facing. The chain crosses the membrane as a helical span at residues 66-85 (YIFCTDLWLIAALYLTWMVL). Topologically, residues 86–361 (DWNTPYKGGR…LHDSEMLEIV (276 aa)) are cytoplasmic.

This sequence belongs to the diacylglycerol acyltransferase family.

Its subcellular location is the endoplasmic reticulum membrane. The protein localises to the lipid droplet. It is found in the cytoplasm. The protein resides in the perinuclear region. It catalyses the reaction an acyl-CoA + a 1,2-diacyl-sn-glycerol = a triacyl-sn-glycerol + CoA. The enzyme catalyses all-trans-retinol + an acyl-CoA = an all-trans-retinyl ester + CoA. It carries out the reaction 2-(9Z-octadecenoyl)-glycerol + (9Z)-octadecenoyl-CoA = 1,2-di-(9Z-octadecenoyl)-sn-glycerol + CoA. The catalysed reaction is 1,2-di-(9Z-octadecenoyl)-sn-glycerol + (9Z)-octadecenoyl-CoA = 1,2,3-tri-(9Z-octadecenoyl)-glycerol + CoA. It catalyses the reaction all-trans-retinol + hexadecanoyl-CoA = all-trans-retinyl hexadecanoate + CoA. The enzyme catalyses 1-O-(9Z-octadecenyl)-glycerol + (9Z)-octadecenoyl-CoA = 1-O-(9Z-octadecyl)-3-(9Z-octadecenoyl)-glycerol + CoA. It carries out the reaction 1-(9Z-octadecenoyl)-glycerol + (9Z)-octadecenoyl-CoA = 1,2-di-(9Z-octadecenoyl)-glycerol + CoA. The catalysed reaction is 1,2-di-(9Z-octadecenoyl)-sn-glycerol + hexadecanoyl-CoA = 1,2-di-(9Z)-octadecenoyl-3-hexadecanoyl-sn-glycerol + CoA. It catalyses the reaction 1,3-di-(9Z-octadecenoyl)-glycerol + (9Z)-octadecenoyl-CoA = 1,2,3-tri-(9Z-octadecenoyl)-glycerol + CoA. The enzyme catalyses 2,3-di-(9Z)-octadecenoyl-sn-glycerol + (9Z)-octadecenoyl-CoA = 1,2,3-tri-(9Z-octadecenoyl)-glycerol + CoA. It carries out the reaction 2-(9Z-octadecenoyl)-glycerol + hexadecanoyl-CoA = 1-hexadecanoyl-2-(9Z-octadecenoyl)-sn-glycerol + CoA. The protein operates within glycerolipid metabolism; triacylglycerol biosynthesis. Essential acyltransferase that catalyzes the terminal and only committed step in triacylglycerol synthesis by using diacylglycerol and fatty acyl CoA as substrates. Required for synthesis and storage of intracellular triglycerides. Probably plays a central role in cytosolic lipid accumulation. The polypeptide is Diacylglycerol O-acyltransferase 2 (dgat2) (Xenopus tropicalis (Western clawed frog)).